Here is a 223-residue protein sequence, read N- to C-terminus: Holliday junction branch migration complex subunit RuvA (223 aa).

Residues 1-67 are domain I; that stretch reads MIGWLKGEKI…EDGSNLFGFI (67 aa). The tract at residues 68–146 is domain II; that stretch reads EKSERDLFRK…DFDLNNEFSP (79 aa). The segment at 147–157 is flexible linker; sequence PTKLRPESAED. The interval 158–223 is domain III; it reads LNEELLTEIK…FKQALITLNK (66 aa).

It belongs to the RuvA family. Homotetramer. Forms an RuvA(8)-RuvB(12)-Holliday junction (HJ) complex. HJ DNA is sandwiched between 2 RuvA tetramers; dsDNA enters through RuvA and exits via RuvB. An RuvB hexamer assembles on each DNA strand where it exits the tetramer. Each RuvB hexamer is contacted by two RuvA subunits (via domain III) on 2 adjacent RuvB subunits; this complex drives branch migration. In the full resolvosome a probable DNA-RuvA(4)-RuvB(12)-RuvC(2) complex forms which resolves the HJ.

It localises to the cytoplasm. Its function is as follows. The RuvA-RuvB-RuvC complex processes Holliday junction (HJ) DNA during genetic recombination and DNA repair, while the RuvA-RuvB complex plays an important role in the rescue of blocked DNA replication forks via replication fork reversal (RFR). RuvA specifically binds to HJ cruciform DNA, conferring on it an open structure. The RuvB hexamer acts as an ATP-dependent pump, pulling dsDNA into and through the RuvAB complex. HJ branch migration allows RuvC to scan DNA until it finds its consensus sequence, where it cleaves and resolves the cruciform DNA. This Prochlorococcus marinus (strain MIT 9211) protein is Holliday junction branch migration complex subunit RuvA.